The following is a 135-amino-acid chain: MALERTLSIIKPDAVAKNVIGEIYTRFERAGFKIVEAKMIQLDDELAGGFYAEHKERPFYKDLVAFMTSGPVVVSVLEGEGAVLRHRELMGATNPKEAAAGTLRADYATSIDANAVHGSDSVESATREIAYFFGK.

Residues K11, F59, R87, T93, R104, and N114 each contribute to the ATP site. H117 serves as the catalytic Pros-phosphohistidine intermediate.

It belongs to the NDK family. In terms of assembly, homotetramer. Mg(2+) is required as a cofactor.

The protein resides in the cytoplasm. It catalyses the reaction a 2'-deoxyribonucleoside 5'-diphosphate + ATP = a 2'-deoxyribonucleoside 5'-triphosphate + ADP. The catalysed reaction is a ribonucleoside 5'-diphosphate + ATP = a ribonucleoside 5'-triphosphate + ADP. In terms of biological role, major role in the synthesis of nucleoside triphosphates other than ATP. The ATP gamma phosphate is transferred to the NDP beta phosphate via a ping-pong mechanism, using a phosphorylated active-site intermediate. The chain is Nucleoside diphosphate kinase from Marinomonas sp. (strain MWYL1).